A 134-amino-acid polypeptide reads, in one-letter code: RxLR effector protein Avh238 (134 aa).

A signal peptide spans 1–21; sequence MRGVFFVAVAVAIFARSSAEA. Positions 44-68 match the RxLR-dEER motif; that stretch reads RFLRVADPEDDDLAAPADDGKTEER. Residues 49 to 70 are disordered; the sequence is ADPEDDDLAAPADDGKTEERAP. The span at 61-70 shows a compositional bias: basic and acidic residues; sequence DDGKTEERAP.

This sequence belongs to the RxLR effector family. As to quaternary structure, interacts with host 1-aminocyclopropane-1-carboxylate synthases ACS1, ACS2, ACS3, ACS10 and ACS12.

Its subcellular location is the secreted. It localises to the host cytoplasm. It is found in the host nucleus. Effector that suppresses plant defense responses during the early stages of pathogen infection. Suppresses cell death induced by effectors and PAMPs in plant hosts. Is able to induced cell death in tomato, tobacco, eggplant, and potato, but not in A.thaliana. Interacts with and destabilizes host 1-aminocyclopropane-1-carboxylate synthases. By suppressing type2 ACS-catalyzed ethylene biosynthesis, Avh238 facilitates Phytophthora infection. The polypeptide is RxLR effector protein Avh238 (Avh238) (Phytophthora sojae (strain P6497) (Soybean stem and root rot agent)).